The chain runs to 296 residues: Cytidine deaminase (296 aa).

CMP/dCMP-type deaminase domains are found at residues 47 to 167 (DSHE…FGPA) and 186 to 296 (ESDD…VDPV). Position 88–90 (88–90 (NLE)) interacts with substrate. Position 101 (His-101) interacts with Zn(2+). The active-site Proton donor is Glu-103. Zn(2+)-binding residues include Cys-128 and Cys-131.

The protein belongs to the cytidine and deoxycytidylate deaminase family. In terms of assembly, homodimer. The cofactor is Zn(2+).

The catalysed reaction is cytidine + H2O + H(+) = uridine + NH4(+). It catalyses the reaction 2'-deoxycytidine + H2O + H(+) = 2'-deoxyuridine + NH4(+). In terms of biological role, this enzyme scavenges exogenous and endogenous cytidine and 2'-deoxycytidine for UMP synthesis. This chain is Cytidine deaminase, found in Shewanella amazonensis (strain ATCC BAA-1098 / SB2B).